The following is a 402-amino-acid chain: MDRRVVITGMGGLCGLGTDTTSIWKWMREGRSAIGPLLNTELHGLKGIVGAEVKALPDHNIDRKQLVSMDRISVLAVIAAHEAMRQAGLSCNEGNALRFGATVGVGLGGWDATEKAYRTLLVDGGTRTEIFTGVKAMPSAAACQVSMSLGLRGPVFGVTSACSSANHAIASAVDQIKCGRADVMLAGGSDAPLVWIVLKAWEAMRALAPDTCRPFSAGRKGVVLGEGAGMAVLESYEHATARGATILAEVAGVGLSADAFHITAPAVHGPESAMRACLADAGLNAEDVDYLNAHGTGTKANDQNETTAIKRVFGDHAYSMSISSTKSTHAHCIGAASALEMIACVMAIQEGVVPPTANYREPDPDCDLDVTPNVPRERKVRVAMSNAFAMGGTNAVLAFKQV.

The region spanning 2–401 (DRRVVITGMG…GTNAVLAFKQ (400 aa)) is the Ketosynthase family 3 (KS3) domain. Catalysis depends on for beta-ketoacyl synthase activity residues Cys162, His294, and His331. The chain crosses the membrane as a helical span at residues 329-348 (HAHCIGAASALEMIACVMAI).

Belongs to the thiolase-like superfamily. Beta-ketoacyl-ACP synthases family.

The protein localises to the cell inner membrane. Functionally, proposed to synthesize NOD factor fatty acyl chain. Involved in the synthesis of a highly unsaturated fatty acid moiety, which forms part of a lipo-oligosaccharide that is responsible for host specificity. This is Nodulation protein E (nodE) from Rhizobium meliloti (strain 1021) (Ensifer meliloti).